The sequence spans 234 residues: MWGCGARALLGVWEVRLAGFLGRRLLGSNAAAGKSIAPQCWNCGHAREAGCGDEFFCSHCRALQPPDPTRDYFSLMNCNRSFRVDVTKLQHRYQQLQRLVHPDFFSQKSQTEKHFSDKHSTLVNDAYKTLQAPLTRGLYLLKLQGIEIPEGTDYKADSQFLVEIMEINERLADAQSEAAMEEIEATVRAKQKEFTDNINSAFEQGDFEKAKELLTKMRYFSNIEEKIKLSKTPL.

Positions 40, 43, 57, and 60 each coordinate a divalent metal cation. Residues 71–143 enclose the J domain; that stretch reads DYFSLMNCNR…LTRGLYLLKL (73 aa).

It belongs to the HscB family. In terms of assembly, interacts with ISCU and HSPA9 to form an iron-sulfur transfer complex. Interacts with SDHAF1 (via the first LYR motif); the interaction recruits the iron-sulfur transfer complex composed of HSC20, HSPA9 and ISCU and mediates the incorporation of iron-sulfur clusters into SDHB which also interacts with HSC20. Interacts with the cytoplasmic form of ISCU and with CIA complex member CIAO1 (via LYR motif). As to quaternary structure, homodimer. Interacts with ISCU (cytoplasmic form); this interaction stabilizes the (Fe-S) clusters on ISCU. Interacts with the CIA complex member CIAO1 (via LYR motif).

It localises to the cytoplasm. The protein localises to the mitochondrion. It functions in the pathway cofactor biosynthesis; iron-sulfur cluster biosynthesis. Functionally, acts as a co-chaperone in iron-sulfur cluster assembly in mitochondria. Required for incorporation of iron-sulfur clusters into SDHB, the iron-sulfur protein subunit of succinate dehydrogenase that is involved in complex II of the mitochondrial electron transport chain. Recruited to SDHB by interaction with SDHAF1 which first binds SDHB and then recruits the iron-sulfur transfer complex formed by HSC20, HSPA9 and ISCU through direct binding to HSC20. Plays an essential role in hematopoiesis. In terms of biological role, acts as a co-chaperone in iron-sulfur cluster assembly in the cytoplasm. Also mediates complex formation between components of the cytosolic iron-sulfur biogenesis pathway and the CIA targeting complex composed of CIAO1, DIPK1B/FAM69B and MMS19 by binding directly to the scaffold protein ISCU and to CIAO1. This facilitates iron-sulfur cluster insertion into a number of cytoplasmic and nuclear proteins including POLD1, ELP3, DPYD and PPAT. The chain is Iron-sulfur cluster co-chaperone protein HscB from Mus musculus (Mouse).